A 203-amino-acid chain; its full sequence is Ribonuclease HII (203 aa).

The RNase H type-2 domain occupies 18–203 (GQYAGVDEVG…SFRPVREALA (186 aa)). Residues D24, E25, and D116 each contribute to the a divalent metal cation site.

It belongs to the RNase HII family. It depends on Mn(2+) as a cofactor. Mg(2+) serves as cofactor.

The protein resides in the cytoplasm. The enzyme catalyses Endonucleolytic cleavage to 5'-phosphomonoester.. In terms of biological role, endonuclease that specifically degrades the RNA of RNA-DNA hybrids. The sequence is that of Ribonuclease HII from Shewanella pealeana (strain ATCC 700345 / ANG-SQ1).